Reading from the N-terminus, the 406-residue chain is Probable endo-xylogalacturonan hydrolase A (406 aa).

The N-terminal stretch at 1 to 18 is a signal peptide; the sequence is MTLYRNLLLLASLGLSYA. The N-linked (GlcNAc...) asparagine glycan is linked to Asn84. 2 PbH1 repeats span residues 183 to 213 and 214 to 235; these read ATNV…DIGE and STYV…ALKP. Asp228 serves as the catalytic Proton donor. Residue His251 is part of the active site. 3 PbH1 repeats span residues 266–289, 299–320, and 333–375; these read VKNI…KTYP, VSNV…QIQS, and PGNA…SISG. Residues Asn278 and Asn301 are each glycosylated (N-linked (GlcNAc...) asparagine).

The protein belongs to the glycosyl hydrolase 28 family.

It is found in the secreted. In terms of biological role, pectinolytic enzyme involved in the degradation of xylogalacturonan (xga), a galacturonan backbone heavily substituted with xylose, and which is one important component of the hairy regions of pectin. Activity requires a galacturonic acid backbone substituted with xylose. The chain is Probable endo-xylogalacturonan hydrolase A (xghA) from Aspergillus niger (strain ATCC MYA-4892 / CBS 513.88 / FGSC A1513).